Reading from the N-terminus, the 206-residue chain is N-(5'-phosphoribosyl)anthranilate isomerase (206 aa).

The protein belongs to the TrpF family.

The catalysed reaction is N-(5-phospho-beta-D-ribosyl)anthranilate = 1-(2-carboxyphenylamino)-1-deoxy-D-ribulose 5-phosphate. Its pathway is amino-acid biosynthesis; L-tryptophan biosynthesis; L-tryptophan from chorismate: step 3/5. In Pseudomonas syringae pv. tomato (strain ATCC BAA-871 / DC3000), this protein is N-(5'-phosphoribosyl)anthranilate isomerase.